A 212-amino-acid polypeptide reads, in one-letter code: Eukaryotic translation initiation factor 4E-1 (212 aa).

Residues Cys125 and Cys129 are joined by a disulfide bond.

The protein belongs to the eukaryotic initiation factor 4E family. In terms of assembly, EIF4F is a multi-subunit complex, the composition of which varies with external and internal environmental conditions. It is composed of at least EIF4A, EIF4E and EIF4G. EIF4E is also known to interact with other partners, including pgl-1. Interacts with ifet-1. As to expression, enriched in the germline from L3 larvae to adults; regions of the gonad undergoing spermatogenesis. Expressed in germ granules (P granules); when associated with pgl-1.

The protein localises to the cytoplasm. Functionally, recognizes and binds the 7-methylguanosine-containing mRNA cap during an early step in the initiation of protein synthesis and facilitates ribosome binding by inducing the unwinding of the mRNAs secondary structures. All 5 eIF4E proteins bind monomethyl cap structures. Only ife-1, ife-2 and ife-5 bind trimethyl cap structures which result from trans-splicing. Translation of trimethyl cap structure mRNAs may be regulated by intracellular redox state; disulfide bonds change the width and depth of the cap-binding cavity determining selectivity to mRNA caps. Required for progression through meiotic divisions during spermatogenesis and for the production of viable sperm. It is not required during oogenesis. This Caenorhabditis elegans protein is Eukaryotic translation initiation factor 4E-1 (ife-1).